The following is an 82-amino-acid chain: Small ribosomal subunit protein bS16 (82 aa).

This sequence belongs to the bacterial ribosomal protein bS16 family.

The protein is Small ribosomal subunit protein bS16 of Histophilus somni (strain 2336) (Haemophilus somnus).